A 357-amino-acid chain; its full sequence is tRNA pseudouridine synthase D (357 aa).

Residue aspartate 76 is the Nucleophile of the active site. The TRUD domain occupies 151 to 331 (GMPNYFGYQR…DGRYKDEEAQ (181 aa)).

The protein belongs to the pseudouridine synthase TruD family.

The catalysed reaction is uridine(13) in tRNA = pseudouridine(13) in tRNA. In terms of biological role, responsible for synthesis of pseudouridine from uracil-13 in transfer RNAs. The sequence is that of tRNA pseudouridine synthase D from Sulfurimonas denitrificans (strain ATCC 33889 / DSM 1251) (Thiomicrospira denitrificans (strain ATCC 33889 / DSM 1251)).